The primary structure comprises 1890 residues: Callose synthase 9 (1890 aa).

The Cytoplasmic segment spans residues 1 to 489 (MSRAESSWER…EHRTFLHLYH (489 aa)). Residues 490 to 510 (SFHRLWIFLAMMFQALAIIAF) traverse the membrane as a helical segment. At 511-523 (NKDDLTSRKTLLQ) the chain is on the extracellular side. A helical membrane pass occupies residues 524-544 (ILSLGPTFVVMKFSESVLEVI). Residues 545-560 (MMYGAYSTTRRLAVSR) are Cytoplasmic-facing. The chain crosses the membrane as a helical span at residues 561-581 (IFLRFIWFGLASVFISFLYVK). The Extracellular portion of the chain corresponds to 582 to 591 (SLKAPNSDSP). Residues 592-612 (IVQLYLIVIAIYGGVQFFFSI) form a helical membrane-spanning segment. Residues 613–658 (LMRIPTCHNIANKCDRWPVIRFFKWMRQERHYVGRGMYERTSDFIK) are Cytoplasmic-facing. Residues 659-679 (YLLFWLVVLSAKFSFAYFLQI) traverse the membrane as a helical segment. The Extracellular portion of the chain corresponds to 680–722 (KPLVGPTRMIVKQNNIPYSWHDFVSRKNYNALTVASLWAPVVA). A helical membrane pass occupies residues 723-743 (IYLLDIHIFYTIFSAFLGFLL). The Cytoplasmic segment spans residues 744–1457 (GARDRLGEIR…QLLDFFRMMS (714 aa)). Residues 1458 to 1478 (FFFTTVGFYLCTMLTVLTVYI) form a helical membrane-spanning segment. The Extracellular portion of the chain corresponds to 1479 to 1512 (FLYGRAYLALSGVGATIRERAILLDDTALSAALN). The chain crosses the membrane as a helical span at residues 1513–1533 (AQFLFQIGVFTAVPMVLGFIL). The Cytoplasmic segment spans residues 1534 to 1539 (EQGFLQ). A helical transmembrane segment spans residues 1540–1560 (AIVSFITMQFQLCTVFFTFSL). Residues 1561–1609 (GTRTHYFGRTILHGGARYQATGRGFVVKHIKFSENYRLYSRSHFVKAME) lie on the Extracellular side of the membrane. 2 helical membrane passes run 1610-1630 (VILL…AVSY) and 1631-1651 (ILLT…PYLF). The Extracellular portion of the chain corresponds to 1652–1703 (NPAGFEWQKVVEDFKEWTNWLFYRGGIGVKGAESWEAWWEEELSHIRTLSGR). Residues 1704 to 1724 (IMETILSLRFFIFQYGIVYKL) traverse the membrane as a helical segment. The Cytoplasmic segment spans residues 1725-1732 (KLQGSDTS). Residues 1733 to 1753 (FAVYGWSWVAFAMIIVLFKVF) traverse the membrane as a helical segment. Topologically, residues 1754–1768 (TFSQKISVNFQLLLR) are extracellular. Residues 1769–1789 (FIQGLSLLMALAGIIVAVVLT) traverse the membrane as a helical segment. At 1790–1795 (PLSVTD) the chain is on the cytoplasmic side. A helical membrane pass occupies residues 1796–1816 (IFACVLAFIPTGWGILSIACA). Residues 1817-1838 (WKPVLKRMGMWKSIRSLARLYD) are Extracellular-facing. A helical membrane pass occupies residues 1839-1859 (ALMGMLIFLPVALCSWFPFVS). Residues 1860–1890 (TFQTRMMFNQAFSRGLEISLILAGDNPNSGL) are Cytoplasmic-facing.

This sequence belongs to the glycosyltransferase 48 family.

It localises to the cell membrane. It catalyses the reaction [(1-&gt;3)-beta-D-glucosyl](n) + UDP-alpha-D-glucose = [(1-&gt;3)-beta-D-glucosyl](n+1) + UDP + H(+). Involved in sporophytic and gametophytic development. Required for normal plant development. During pollen formation, required for the entry of microspores into mitosis and microspore symmetric division. May be required for correct temporal and spatial control of callose deposition during pollen mitosis. During plant growth and development, callose is found as a transitory component of the cell plate in dividing cells, is a major component of pollen mother cell walls and pollen tubes, and is found as a structural component of plasmodesmatal canals. This is Callose synthase 9 (CALS9) from Arabidopsis thaliana (Mouse-ear cress).